Reading from the N-terminus, the 391-residue chain is Formate-dependent phosphoribosylglycinamide formyltransferase (391 aa).

N(1)-(5-phospho-beta-D-ribosyl)glycinamide-binding positions include 20 to 21 (EL) and glutamate 80. ATP-binding positions include arginine 112, lysine 153, 158 to 163 (SSGKGQ), 193 to 196 (EGFV), and glutamate 201. The region spanning 117–306 (RLAAETLGLP…EFALHVRAIL (190 aa)) is the ATP-grasp domain. Glutamate 265 and glutamate 277 together coordinate Mg(2+). N(1)-(5-phospho-beta-D-ribosyl)glycinamide contacts are provided by residues aspartate 284, lysine 354, and 361–362 (RR).

Belongs to the PurK/PurT family. Homodimer.

It carries out the reaction N(1)-(5-phospho-beta-D-ribosyl)glycinamide + formate + ATP = N(2)-formyl-N(1)-(5-phospho-beta-D-ribosyl)glycinamide + ADP + phosphate + H(+). It functions in the pathway purine metabolism; IMP biosynthesis via de novo pathway; N(2)-formyl-N(1)-(5-phospho-D-ribosyl)glycinamide from N(1)-(5-phospho-D-ribosyl)glycinamide (formate route): step 1/1. Involved in the de novo purine biosynthesis. Catalyzes the transfer of formate to 5-phospho-ribosyl-glycinamide (GAR), producing 5-phospho-ribosyl-N-formylglycinamide (FGAR). Formate is provided by PurU via hydrolysis of 10-formyl-tetrahydrofolate. This is Formate-dependent phosphoribosylglycinamide formyltransferase from Shewanella sp. (strain W3-18-1).